We begin with the raw amino-acid sequence, 682 residues long: MDAVLACRLRGRGNRVAALRPRPRPGGSAGPSPFALLCAGLSPEPRAGVGSEFPAWFLGGSSQRRNMALLGSRAELEADEDVFEDALETISISSHSDMATSSLHFASCDTQQAPRQRGASTVSSSSSTKVDLKSGLEECAVALNLFLSNKFTDALELLRPWAKESMYHALGYSTIVVLQAVLTFEQQDIQNGISAMKDALQTCQKYRKKYTVVESFSSLLSRGSLEQLSEEEMHAEICYAECLLQKAALTFVQDENMINFIKGGLKIRTSYQIYKECLSILHEIQKNKLQQEFFYEFEGGVKLGSGAFNLMLSLLPARIIRLLEFIGFSGNRELGLLQLREGASGRSMRSALCCLTILAFHTYISLILGTGEVNVAEAERLLAPFLQQFPNGSLVLFYHARIELLKGNLEEAQEVFQKCISVQEEWKQFHHLCYWELMWINVFQQNWMQAYYYSDLLCKESKWSKATYVFLKAAILSMLPEEDVVATNENVVTLFRQVDSLKQRIAGKSIPTEKFAVRKARRYSASLPAPVKLILPALEMMYVWNGFSIVSKRKDLSENLLVTVEKAEAALQSQNFNSFSVDDECLVKLLKGCCLKNLQRPLQAELCYNHVVESEKLLKYDHYLVPFTLFELASLYKSQGEIDKAIKFLETARNNYKDYSLESRLHFRIQAALHLWRKPSSD.

2 TPR repeats span residues 393-426 (SLVL…QEEW) and 626-659 (PFTL…YKDY).

It belongs to the TTC39 family.

In terms of biological role, regulates high density lipoprotein (HDL) cholesterol metabolism by promoting the ubiquitination and degradation of the oxysterols receptors LXR (NR1H2 and NR1H3). The chain is Tetratricopeptide repeat protein 39B from Homo sapiens (Human).